Here is a 4545-residue protein sequence, read N- to C-terminus: Prolow-density lipoprotein receptor-related protein 1 (4545 aa).

The N-terminal stretch at 1 to 19 (MLTPPLLLLLPLLSALVSG) is a signal peptide. The Extracellular portion of the chain corresponds to 20 to 4424 (ATMDAPKTCS…SQQQPGHMAS (4405 aa)). LDL-receptor class A domains follow at residues 26-67 (KTCS…ICPQ) and 71-111 (QRCP…HCRE). 6 disulfides stabilise this stretch: cysteine 28–cysteine 41, cysteine 35–cysteine 54, cysteine 48–cysteine 65, cysteine 73–cysteine 86, cysteine 80–cysteine 99, and cysteine 93–cysteine 109. The 39-residue stretch at 112–150 (LRANCSRMGCQHHCVPTPSGPTCYCNSSFQLQADGKTCK) folds into the EGF-like 1 domain. Asparagine 115 carries N-linked (GlcNAc...) asparagine glycosylation. Disulfide bonds link cysteine 116-cysteine 125, cysteine 121-cysteine 134, cysteine 136-cysteine 149, cysteine 155-cysteine 165, cysteine 161-cysteine 174, and cysteine 176-cysteine 189. N-linked (GlcNAc...) asparagine glycosylation occurs at asparagine 137. Residues 151-190 (DFDECSVYGTCSQLCTNTDGSFTCGCVEGYLLQPDNRSCK) form the EGF-like 2; calcium-binding domain. Asparagine 186, asparagine 240, and asparagine 275 each carry an N-linked (GlcNAc...) asparagine glycan. LDL-receptor class B repeat units lie at residues 293 to 335 (GNFY…DPAM), 336 to 379 (GKVF…DLVS), and 380 to 423 (RLVY…FENY). A glycan (N-linked (GlcNAc...) asparagine) is linked at asparagine 358. An N-linked (GlcNAc...) asparagine glycan is attached at asparagine 447. Positions 475-521 (RSHACENDQYGKPGGCSDICLLANSHKARTCRCRSGFSLGSDGKSCK) constitute an EGF-like 3 domain. Disulfide bonds link cysteine 479–cysteine 494, cysteine 490–cysteine 505, and cysteine 507–cysteine 520. LDL-receptor class B repeat units lie at residues 572-614 (GFIY…DWMG), 615-660 (DNLY…DPLN), 661-711 (GWMY…DIPA), and 712-755 (GRLY…HGNY). Asparagine 730 carries N-linked (GlcNAc...) asparagine glycosylation. The region spanning 804 to 844 (GTNKCRVNNGGCSSLCLATPGSRQCACAEDQVLDTDGVTCL) is the EGF-like 4 domain. 33 disulfide bridges follow: cysteine 808–cysteine 819, cysteine 815–cysteine 828, cysteine 830–cysteine 843, cysteine 855–cysteine 867, cysteine 862–cysteine 880, cysteine 874–cysteine 891, cysteine 896–cysteine 908, cysteine 903–cysteine 921, cysteine 915–cysteine 932, cysteine 937–cysteine 949, cysteine 944–cysteine 962, cysteine 956–cysteine 972, cysteine 977–cysteine 990, cysteine 985–cysteine 1003, cysteine 997–cysteine 1012, cysteine 1016–cysteine 1028, cysteine 1023–cysteine 1041, cysteine 1035–cysteine 1052, cysteine 1063–cysteine 1076, cysteine 1070–cysteine 1089, cysteine 1083–cysteine 1098, cysteine 1105–cysteine 1119, cysteine 1113–cysteine 1132, cysteine 1126–cysteine 1141, cysteine 1146–cysteine 1160, cysteine 1153–cysteine 1173, cysteine 1167–cysteine 1183, cysteine 1186–cysteine 1197, cysteine 1193–cysteine 1207, cysteine 1209–cysteine 1222, cysteine 1228–cysteine 1238, cysteine 1234–cysteine 1247, and cysteine 1249–cysteine 1262. LDL-receptor class A domains are found at residues 853–893 (PQCQ…LCHQ), 894–934 (HTCP…TCSA), 935–974 (RTCP…SCAY), 975–1014 (PTCF…GCSH), 1014–1054 (HSCS…NCTN), 1061–1100 (GGCH…SCEG), 1103–1143 (HVCD…NCEA), and 1144–1183 (LACR…GELC). Ca(2+)-binding residues include tryptophan 872, aspartate 875, aspartate 877, aspartate 879, aspartate 885, and glutamate 886. Asparagine 929 carries an N-linked (GlcNAc...) asparagine glycan. 6 residues coordinate Ca(2+): tryptophan 1033, aspartate 1036, aspartate 1038, aspartate 1040, aspartate 1046, and glutamate 1047. Asparagine 1051 carries N-linked (GlcNAc...) asparagine glycosylation. The Ca(2+) site is built by tryptophan 1081, aspartate 1084, aspartate 1086, aspartate 1088, aspartate 1094, and glutamate 1095. N-linked (GlcNAc...) asparagine glycans are attached at residues asparagine 1155 and asparagine 1156. EGF-like domains lie at 1184–1223 (DQCS…HTCQ) and 1224–1263 (IQSY…ESCR). Asparagine 1196 and asparagine 1219 each carry an N-linked (GlcNAc...) asparagine glycan. LDL-receptor class B repeat units follow at residues 1310-1356 (SALY…DWIA), 1357-1399 (GNIY…DPRD), 1400-1446 (GILF…DYLE), 1447-1491 (KRIL…YGGE), and 1492-1532 (VYWT…YHPS). Asparagine 1512 carries an N-linked (GlcNAc...) asparagine glycan. An EGF-like 7 domain is found at 1537–1580 (APNPCEANGGRGPCSHLCLINYNRTVSCACPHLMKLHKDNTTCY). Disulfide bonds link cysteine 1541–cysteine 1554, cysteine 1550–cysteine 1564, and cysteine 1566–cysteine 1579. Asparagine 1559, asparagine 1576, asparagine 1617, and asparagine 1646 each carry an N-linked (GlcNAc...) asparagine glycan. 4 LDL-receptor class B repeats span residues 1628–1670 (QRVY…DWVS), 1671–1714 (RNLF…HPLR), 1715–1754 (GKLY…DFPE), and 1755–1799 (SKLY…MGDK). Residues asparagine 1724, asparagine 1734, asparagine 1764, and asparagine 1826 are each glycosylated (N-linked (GlcNAc...) asparagine). Residues 1847-1888 (GTNPCSVNNGDCSQLCLPTSETTRSCMCTAGYSLRSGQQACE) enclose the EGF-like 8 domain. Intrachain disulfides connect cysteine 1851/cysteine 1862, cysteine 1858/cysteine 1872, and cysteine 1874/cysteine 1887. Asparagine 1934 is a glycosylation site (N-linked (GlcNAc...) asparagine). LDL-receptor class B repeat units follow at residues 1935–1977 (DTIY…DWIA), 1978–2020 (GNIY…HPEK), 2021–2064 (GYLF…DYQG), and 2065–2108 (GKLY…FEDF). The N-linked (GlcNAc...) asparagine glycan is linked to asparagine 1996. Lysine 2010 bears the N6-acetyllysine mark. An N-linked (GlcNAc...) asparagine glycan is attached at asparagine 2049. Asparagine 2118 and asparagine 2128 each carry an N-linked (GlcNAc...) asparagine glycan. The EGF-like 9 domain occupies 2156–2196 (GTNVCAVANGGCQQLCLYRGGGQRACACAHGMLAEDGASCR). 3 disulfides stabilise this stretch: cysteine 2160-cysteine 2171, cysteine 2167-cysteine 2181, and cysteine 2183-cysteine 2195. 5 LDL-receptor class B repeats span residues 2254–2295 (NRIF…HRGW), 2296–2344 (DTLY…DECQ), 2345–2389 (NLMF…DHRA), 2390–2432 (EKLY…YGEH), and 2433–2474 (IFWT…VAND). A glycan (N-linked (GlcNAc...) asparagine) is linked at asparagine 2473. An EGF-like 10 domain is found at 2479-2519 (ELSPCRINNGGCQDLCLLTHQGHVNCSCRGGRILQEDFTCR). 3 disulfide bridges follow: cysteine 2483-cysteine 2494, cysteine 2490-cysteine 2504, and cysteine 2506-cysteine 2518. An N-linked (GlcNAc...) asparagine glycan is attached at asparagine 2503. N-linked (GlcNAc...) asparagine glycosylation is present at asparagine 2522. LDL-receptor class A domains are found at residues 2523-2564 (SSCR…YCNS), 2565-2603 (RRCK…PCNK), 2604-2642 (TACG…NCSA), 2643-2691 (TDCS…DCPG), 2695-2733 (PRCP…HCNK), 2733-2772 (KFCS…HCEG), and 2773-2815 (KTCG…GCLY). 6 disulfides stabilise this stretch: cysteine 2525/cysteine 2538, cysteine 2533/cysteine 2551, cysteine 2545/cysteine 2562, cysteine 2567/cysteine 2579, cysteine 2574/cysteine 2592, and cysteine 2586/cysteine 2601. Asparagine 2602 carries an N-linked (GlcNAc...) asparagine glycan. Intrachain disulfides connect cysteine 2606/cysteine 2618, cysteine 2613/cysteine 2631, cysteine 2625/cysteine 2640, cysteine 2645/cysteine 2667, cysteine 2661/cysteine 2680, cysteine 2674/cysteine 2689, cysteine 2697/cysteine 2709, cysteine 2704/cysteine 2722, cysteine 2716/cysteine 2731, cysteine 2735/cysteine 2747, cysteine 2742/cysteine 2760, cysteine 2754/cysteine 2770, cysteine 2775/cysteine 2788, cysteine 2782/cysteine 2801, and cysteine 2795/cysteine 2813. Asparagine 2621 and asparagine 2639 each carry an N-linked (GlcNAc...) asparagine glycan. Asparagine 2816 carries an N-linked (GlcNAc...) asparagine glycan. LDL-receptor class A domains are found at residues 2817–2856 (STCD…ECEY), 2857–2900 (PTCG…HCTS), and 2903–2941 (HKCN…RGCH). 15 cysteine pairs are disulfide-bonded: cysteine 2819–cysteine 2831, cysteine 2826–cysteine 2844, cysteine 2838–cysteine 2854, cysteine 2859–cysteine 2871, cysteine 2866–cysteine 2885, cysteine 2879–cysteine 2898, cysteine 2905–cysteine 2918, cysteine 2913–cysteine 2931, cysteine 2925–cysteine 2940, cysteine 2945–cysteine 2957, cysteine 2953–cysteine 2966, cysteine 2968–cysteine 2981, cysteine 2987–cysteine 2997, cysteine 2993–cysteine 3006, and cysteine 3008–cysteine 3022. A glycan (N-linked (GlcNAc...) asparagine) is linked at asparagine 2906. Residues 2942–2982 (VNECLSRKLSGCSQDCEDLKIGFKCRCRPGFRLKDDGRTCA) enclose the EGF-like 11 domain. An EGF-like 12; calcium-binding domain is found at 2983–3023 (DLDECSTTFPCSQLCINTHGSYKCLCVEGYAPRGGDPHSCK). Asparagine 3049 and asparagine 3090 each carry an N-linked (GlcNAc...) asparagine glycan. 5 LDL-receptor class B repeats span residues 3070-3114 (QMIY…DWVG), 3115-3157 (GNLY…DVQN), 3158-3201 (GYLY…DYVT), 3202-3244 (ERIY…FEDY), and 3245-3285 (VYWT…FHAL). N-linked (GlcNAc...) asparagine glycosylation occurs at asparagine 3265. Residues 3291–3332 (PNHPCKVNNGGCSNLCLLSPGGGHKCACPTNFYLGGDGRTCV) form the EGF-like 13 domain. 3 cysteine pairs are disulfide-bonded: cysteine 3295–cysteine 3306, cysteine 3302–cysteine 3316, and cysteine 3318–cysteine 3331. LDL-receptor class A domains lie at 3333 to 3372 (SNCT…DCPE), 3373 to 3411 (FKCR…NCDI), 3412 to 3451 (HVCL…DCPE), 3452 to 3492 (VTCA…NCTQ), 3493 to 3534 (MTCG…ECDE), 3535 to 3573 (RTCE…SCTP), 3574 to 3612 (RPCS…DCTP), 3612 to 3650 (PRCD…ACGT), 3653 to 3693 (RTCP…ECAR), 3694 to 3734 (FICP…DCEP), and 3740 to 3779 (PHCK…DCSI). Asparagine 3334 carries N-linked (GlcNAc...) asparagine glycosylation. 39 disulfide bridges follow: cysteine 3335/cysteine 3347, cysteine 3342/cysteine 3360, cysteine 3354/cysteine 3370, cysteine 3375/cysteine 3387, cysteine 3382/cysteine 3400, cysteine 3394/cysteine 3409, cysteine 3414/cysteine 3427, cysteine 3421/cysteine 3440, cysteine 3434/cysteine 3449, cysteine 3454/cysteine 3467, cysteine 3461/cysteine 3480, cysteine 3474/cysteine 3490, cysteine 3495/cysteine 3508, cysteine 3502/cysteine 3521, cysteine 3515/cysteine 3532, cysteine 3537/cysteine 3549, cysteine 3544/cysteine 3562, cysteine 3556/cysteine 3571, cysteine 3576/cysteine 3588, cysteine 3583/cysteine 3601, cysteine 3595/cysteine 3610, cysteine 3614/cysteine 3626, cysteine 3621/cysteine 3639, cysteine 3633/cysteine 3648, cysteine 3655/cysteine 3667, cysteine 3662/cysteine 3680, cysteine 3674/cysteine 3691, cysteine 3696/cysteine 3710, cysteine 3704/cysteine 3723, cysteine 3717/cysteine 3732, cysteine 3742/cysteine 3755, cysteine 3750/cysteine 3768, cysteine 3762/cysteine 3777, cysteine 3786/cysteine 3799, cysteine 3793/cysteine 3808, cysteine 3810/cysteine 3823, cysteine 3829/cysteine 3839, cysteine 3835/cysteine 3848, and cysteine 3850/cysteine 3861. N-linked (GlcNAc...) asparagine glycosylation occurs at asparagine 3489. Asparagine 3663 carries N-linked (GlcNAc...) asparagine glycosylation. EGF-like domains are found at residues 3782 to 3824 (KLTS…PGCQ) and 3825 to 3862 (DINE…NTCK). Asparagine 3789 carries an N-linked (GlcNAc...) asparagine glycan. An N-linked (GlcNAc...) asparagine glycan is attached at asparagine 3840. 4 LDL-receptor class B repeats span residues 3913–3955 (GRVY…HLNI), 3971–4013 (GNVY…DPLR), 4014–4057 (GTMY…DYHN), and 4058–4102 (ERLY…FEDY). The short motif at 3941–3944 (RHRR) is the Recognition site for proteolytical processing element. N-linked (GlcNAc...) asparagine glycosylation is present at asparagine 3954. N-linked (GlcNAc...) asparagine glycans are attached at residues asparagine 4076 and asparagine 4126. EGF-like domains are found at residues 4148-4184 (VTNP…GTCV), 4197-4233 (RPGT…DKCE), 4233-4269 (ELDQ…PKCT), 4269-4305 (TAQV…DRCQ), 4305-4341 (QYRQ…PRCE), 4341-4376 (EVNK…PSCL), and 4374-4410 (SCLT…PRCE). Cystine bridges form between cysteine 4152–cysteine 4161, cysteine 4157–cysteine 4170, cysteine 4172–cysteine 4183, cysteine 4201–cysteine 4211, cysteine 4205–cysteine 4221, cysteine 4223–cysteine 4232, cysteine 4237–cysteine 4247, cysteine 4241–cysteine 4257, cysteine 4259–cysteine 4268, cysteine 4273–cysteine 4283, cysteine 4277–cysteine 4293, cysteine 4295–cysteine 4304, cysteine 4309–cysteine 4319, cysteine 4313–cysteine 4329, cysteine 4331–cysteine 4340, cysteine 4345–cysteine 4353, and cysteine 4348–cysteine 4364. An N-linked (GlcNAc...) asparagine glycan is attached at asparagine 4180. 2 N-linked (GlcNAc...) asparagine glycosylation sites follow: asparagine 4279 and asparagine 4280. Asparagine 4365 is a glycosylation site (N-linked (GlcNAc...) asparagine). Cystine bridges form between cysteine 4366/cysteine 4375, cysteine 4378/cysteine 4388, cysteine 4382/cysteine 4398, and cysteine 4400/cysteine 4409. The helical transmembrane segment at 4425-4445 (ILIPLLLLLLLLLVAGVVFWY) threads the bilayer. At 4446 to 4545 (KRRVRGAKGF…PEDEIGDPLA (100 aa)) the chain is on the cytoplasmic side. The tract at residues 4446–4545 (KRRVRGAKGF…PEDEIGDPLA (100 aa)) is interaction with MAFB. Position 4461 is a phosphothreonine (threonine 4461). The short motif at 4503–4508 (FTNPVY) is the NPXY motif element. Tyrosine 4508 is modified (phosphotyrosine). A phosphoserine mark is found at serine 4518, serine 4521, and serine 4524.

It belongs to the LDLR family. Heterodimer of an 85-kDa membrane-bound carboxyl subunit and a non-covalently attached 515-kDa N-terminal subunit. Intracellular domain interacts with MAFB. Found in a complex with PID1/PCLI1, LRP1 and CUBNI. Interacts with SNX17, PID1/PCLI1, PDGF and CUBN. The intracellular domain interacts with SHC1, GULP1 and DAB1. Can weakly interact (via NPXY motif) with DAB2 (via PID domain); the interaction is enhanced by tyrosine phosphorylation of the NPXY motif. Interacts with MDK; promotes neuronal survival. Interacts with LRPAP1; this interaction is followed by rapid internalization. Interacts with uPA/PLAU and PAI1/SERPINE1, either individually or in complex with each other, leading to rapid endocytosis; this interaction is abolished in the presence of LRPAP1/RAP. Also interacts with tPA/PLAT alone or in complex with SERPINE1. Interacts with the urokinase receptor PLAUR; this interaction leads to PLAUR internalization and is impaired in the presence of SORL1. Interacts with PDGFB. Interacts with TAU/MAPT, leading to endocytosis; this interaction is reduced in the presence of LRPAP1/RAP. Interacts with IGFBP3. Interacts with ADGRG6. In terms of processing, phosphorylated on serine and threonine residues. Phosphorylated on tyrosine residues upon stimulation with PDGF. Tyrosine phosphorylation promotes interaction with SHC1. Post-translationally, cleaved into a 85 kDa membrane-spanning subunit (LRP-85) and a 515 kDa large extracellular domain (LRP-515) that remains non-covalently associated. Gamma-secretase-dependent cleavage of LRP-85 releases the intracellular domain from the membrane.

The protein resides in the cell membrane. The protein localises to the membrane. Its subcellular location is the coated pit. It is found in the golgi outpost. It localises to the cytoplasm. The protein resides in the cytoskeleton. The protein localises to the microtubule organizing center. Its subcellular location is the nucleus. Functionally, endocytic receptor involved in endocytosis and in phagocytosis of apoptotic cells. Required for early embryonic development. Involved in cellular lipid homeostasis. Involved in the plasma clearance of chylomicron remnants and activated LRPAP1 (alpha 2-macroglobulin), as well as the local metabolism of complexes between plasminogen activators and their endogenous inhibitors. Acts as an alpha-2-macroglobulin receptor. Acts as a TAU/MAPT receptor and controls the endocytosis of TAU/MAPT as well as its subsequent spread. May modulate cellular events, such as APP metabolism, kinase-dependent intracellular signaling, neuronal calcium signaling as well as neurotransmission. Also acts as a receptor for IGFBP3 to mediate cell growth inhibition. In terms of biological role, (Microbial infection) Functions as a receptor for Vibrio cholerae cholix toxin and for Pseudomonas aeruginosa exotoxin A. This Mus musculus (Mouse) protein is Prolow-density lipoprotein receptor-related protein 1.